Consider the following 203-residue polypeptide: Pyridoxine/pyridoxamine 5'-phosphate oxidase (203 aa).

FMN is bound by residues 51-56 (RMVLLK), 66-67 (YT), Arg-72, Lys-73, and Gln-95. Position 56 (Lys-56) interacts with substrate. Substrate is bound by residues Tyr-113, Arg-117, and Ser-121. FMN-binding positions include 130 to 131 (QS) and Trp-175. Position 181 to 183 (181 to 183 (RLH)) interacts with substrate. Position 185 (Arg-185) interacts with FMN.

It belongs to the pyridoxamine 5'-phosphate oxidase family. Homodimer. FMN is required as a cofactor.

It catalyses the reaction pyridoxamine 5'-phosphate + O2 + H2O = pyridoxal 5'-phosphate + H2O2 + NH4(+). The enzyme catalyses pyridoxine 5'-phosphate + O2 = pyridoxal 5'-phosphate + H2O2. It participates in cofactor metabolism; pyridoxal 5'-phosphate salvage; pyridoxal 5'-phosphate from pyridoxamine 5'-phosphate: step 1/1. The protein operates within cofactor metabolism; pyridoxal 5'-phosphate salvage; pyridoxal 5'-phosphate from pyridoxine 5'-phosphate: step 1/1. Catalyzes the oxidation of either pyridoxine 5'-phosphate (PNP) or pyridoxamine 5'-phosphate (PMP) into pyridoxal 5'-phosphate (PLP). The sequence is that of Pyridoxine/pyridoxamine 5'-phosphate oxidase from Novosphingobium aromaticivorans (strain ATCC 700278 / DSM 12444 / CCUG 56034 / CIP 105152 / NBRC 16084 / F199).